A 589-amino-acid polypeptide reads, in one-letter code: TAF5-like RNA polymerase II p300/CBP-associated factor-associated factor 65 kDa subunit 5L (589 aa).

Positions 211 to 221 (ASGSSSRSENN) are enriched in polar residues. Residues 211-230 (ASGSSSRSENNGLEPPDMPS) are disordered. WD repeat units lie at residues 266–305 (NTEQLLNTAEISPDSKLLAAGFDNSCIKLWSLRSKKLKSE), 340–379 (GHCGPVYSTRFLADSSGLLSCSEDMSIRYWDLGSFTNTVL), 382–421 (GHAYPVWDLDISPYSLYFASGSHDRTARLWSFDRTYPLRI), 424–463 (GHLADVDCVKFHPNSNYLATGSTDKTVRLWSAQQGNSVRL), 466–505 (GHRGPVLSLAFSPNGKYLASAGEDQRLKLWDLASGTLYKE), and 508–547 (GHTDNITSLTFSPDSGLIASASMDNSVRVWDIRNTYCSAP).

It belongs to the WD repeat TAF5 family. As to quaternary structure, the PCAF complex is composed of a number of TBP-associated factors (TAFS), such as TAF5, TAF5L, TAF6, TAF6L, TAF9, TAF10 and TAF12, PCAF, and also PCAF-associated factors (PAFs), such as TADA2L/ADA2, TADA3L/ADA3 and SPT3. Component of the STAGA transcription coactivator-HAT complex, at least composed of SUPT3H, GCN5L2, TAF5L, TAF6L, SUPT7L, TADA3L, TAD1L, TAF10, TAF12, TRRAP and TAF9.

It is found in the nucleus. In terms of biological role, functions as a component of the PCAF complex. The PCAF complex is capable of efficiently acetylating histones in a nucleosomal context. The PCAF complex could be considered as the human version of the yeast SAGA complex. With TAF6L, acts as an epigenetic regulator essential for somatic reprogramming. Regulates target genes through H3K9ac deposition and MYC recruitment which trigger MYC regulatory network to orchestrate gene expression programs to control embryonic stem cell state. The protein is TAF5-like RNA polymerase II p300/CBP-associated factor-associated factor 65 kDa subunit 5L of Homo sapiens (Human).